Consider the following 419-residue polypeptide: Acetyltransferase fsoF (419 aa).

The N-linked (GlcNAc...) asparagine glycan is linked to N2. 2 consecutive transmembrane segments (helical) span residues T4–F24 and A62–S82. Residues Q89–T114 form a disordered region. N-linked (GlcNAc...) asparagine glycans are attached at residues N112 and N169. Transmembrane regions (helical) follow at residues Y230–V250, Y314–S334, I337–L357, and V386–M406.

This sequence belongs to the wax synthase family.

The protein localises to the membrane. The enzyme catalyses 3-O-(beta-D-glucopyranosyl)-2alpha-hydroxyisomotiol + acetyl-CoA = 3-O-(beta-D-glucopyranosyl)-2alpha-acetoxyisomotiol + CoA. The catalysed reaction is 2-deacetylfuscoatroside + acetyl-CoA = fuscoatroside + CoA. Its pathway is secondary metabolite biosynthesis; terpenoid biosynthesis. Functionally, terpene cyclase-glycosyl transferase fusion protein; part of the gene cluster that mediates the biosynthesis of the enfumafungin-type antibiotic, fuscoatroside. Within the pathway, fsoF catalyzes the acetylation of C2-alpha-OH following the C2 hydroxylation by the cytochrome monooxygenase fsoD. The fuscoatroside biosynthesis is initiated by the cyclization of 2,3(S)-oxidosqualene through FsoA's terpene cyclase (TC) domain, leading to the formation of the fernane skeleton isomotiol, harboring a fernane triterpene skeleton with a C8-C9 double bond. Subsequently, C2-alpha-hydroxylation mediated by fsoD results in the production of 2-alpha-hydroxy-isomotiol, which is further acetylated by fsoF. The glycosyltransferase (GT) domain of FsoA may convert isomotiol, 2-alpha-hydroxy-isomotiol, and the acetylated derivative of 2-alpha-hydroxy-isomotiol into their corresponding glycosides 3-O-(beta-D-glucopyranosyl)-isomotiol, 3-O-(beta-D-glucopyranosyl)-2-alpha-hydroxy-isomotiol, and 3-O-(beta-D-glucopyranosyl)-2-alpha-acetoxy-isomotiol, which then undergo oxidative cleavage under the action of fsoE to form s 2-deacetoxy-fuscoatroside, 2-deacetyl-fuscoatroside, and fuscoatroside, respectively. Although hydroxylation followed by acetylation of 3-O-(beta-D-glucopyranosyl)-isomotiol and 2-deacetoxy-fuscoatroside by fsoD and fsoF could not be ruled out, this process is likely to occur with difficulty due to bulky steric hindrance caused by the presence of a glycan at C3 in these compounds. Interestingly, fsoE can also utilize the aglycones isomotiol and 2-alpha-hydroxy-isomotiol as substrates to generate 19-beta-hydroxy-isomotiol and 2-alpha,19-beta-dihydroxy-isomotiol, respectively. These reactions occur with lower efficiency. Finally, fsoE can further convert 2-alpha,19-beta-dihydroxy-isomotiol into 2-alpha-hydroxy-ismotiol-19-one and 2-alpha-hydroxy-ismotiol-19-one into 2-deacetyl-3-deglucopyranosyl-fuscoatroside. The protein is Acetyltransferase fsoF of Humicola fuscoatra.